The chain runs to 342 residues: Phosphate acyltransferase (342 aa).

The protein belongs to the PlsX family. In terms of assembly, homodimer. Probably interacts with PlsY.

The protein resides in the cytoplasm. The enzyme catalyses a fatty acyl-[ACP] + phosphate = an acyl phosphate + holo-[ACP]. Its pathway is lipid metabolism; phospholipid metabolism. Functionally, catalyzes the reversible formation of acyl-phosphate (acyl-PO(4)) from acyl-[acyl-carrier-protein] (acyl-ACP). This enzyme utilizes acyl-ACP as fatty acyl donor, but not acyl-CoA. This chain is Phosphate acyltransferase, found in Blochmanniella pennsylvanica (strain BPEN).